A 732-amino-acid chain; its full sequence is uncharacterized protein (732 aa).

The next 2 helical transmembrane spans lie at 687–707 and 712–732; these read YLFP…GSDL and GVKV…YYTS.

This sequence belongs to the FadG family.

It localises to the cell membrane. This is an uncharacterized protein from Bacillus subtilis (strain 168).